A 415-amino-acid chain; its full sequence is 3-isopropylmalate dehydratase large subunit (415 aa).

[4Fe-4S] cluster-binding residues include Cys297, Cys355, and Cys358.

This sequence belongs to the aconitase/IPM isomerase family. LeuC type 2 subfamily. In terms of assembly, heterodimer of LeuC and LeuD. The cofactor is [4Fe-4S] cluster.

It catalyses the reaction (2R,3S)-3-isopropylmalate = (2S)-2-isopropylmalate. It participates in amino-acid biosynthesis; L-leucine biosynthesis; L-leucine from 3-methyl-2-oxobutanoate: step 2/4. In terms of biological role, catalyzes the isomerization between 2-isopropylmalate and 3-isopropylmalate, via the formation of 2-isopropylmaleate. The sequence is that of 3-isopropylmalate dehydratase large subunit from Metallosphaera sedula (strain ATCC 51363 / DSM 5348 / JCM 9185 / NBRC 15509 / TH2).